The sequence spans 175 residues: Peptide deformylase (175 aa).

Fe cation is bound by residues Cys-99 and His-141. Residue Glu-142 is part of the active site. Position 145 (His-145) interacts with Fe cation.

The protein belongs to the polypeptide deformylase family. Fe(2+) serves as cofactor.

The enzyme catalyses N-terminal N-formyl-L-methionyl-[peptide] + H2O = N-terminal L-methionyl-[peptide] + formate. Functionally, removes the formyl group from the N-terminal Met of newly synthesized proteins. Requires at least a dipeptide for an efficient rate of reaction. N-terminal L-methionine is a prerequisite for activity but the enzyme has broad specificity at other positions. In Rickettsia canadensis (strain McKiel), this protein is Peptide deformylase.